Here is a 61-residue protein sequence, read N- to C-terminus: Potassium channel toxin alpha-KTx 18.1 (61 aa).

The first 24 residues, 1 to 24, serve as a signal peptide directing secretion; the sequence is MRFTGIILILISMTLIDSFFEMKV. 3 disulfide bridges follow: Cys-33–Cys-52, Cys-38–Cys-57, and Cys-42–Cys-59.

In terms of tissue distribution, expressed by the venom gland.

Its subcellular location is the secreted. In terms of biological role, reversible blocker of both Kv1.3/KCNA3 potassium channels (high affinity) and Shaker B (mammalian Kv1.1 analog) potassium channels (very low affinity). The chain is Potassium channel toxin alpha-KTx 18.1 from Tityus obscurus (Amazonian scorpion).